The following is a 499-amino-acid chain: Cysteine--tRNA ligase (499 aa).

A Zn(2+)-binding site is contributed by cysteine 30. The 'HIGH' region signature appears at 32-42 (PTVYDRAHLGN). The Zn(2+) site is built by cysteine 221, histidine 246, and glutamate 250. Positions 279–283 (KMSKS) match the 'KMSKS' region motif. Lysine 282 serves as a coordination point for ATP.

This sequence belongs to the class-I aminoacyl-tRNA synthetase family. Monomer. The cofactor is Zn(2+).

It is found in the cytoplasm. It catalyses the reaction tRNA(Cys) + L-cysteine + ATP = L-cysteinyl-tRNA(Cys) + AMP + diphosphate. The chain is Cysteine--tRNA ligase from Cereibacter sphaeroides (strain ATCC 17023 / DSM 158 / JCM 6121 / CCUG 31486 / LMG 2827 / NBRC 12203 / NCIMB 8253 / ATH 2.4.1.) (Rhodobacter sphaeroides).